Reading from the N-terminus, the 166-residue chain is Large ribosomal subunit protein uL11 (166 aa).

An N5-methylarginine modification is found at arginine 67.

Belongs to the universal ribosomal protein uL11 family.

The chain is Large ribosomal subunit protein uL11 (RPL12) from Encephalitozoon cuniculi (strain GB-M1) (Microsporidian parasite).